The chain runs to 178 residues: Transcription factor E (178 aa).

The 84-residue stretch at 3–86 folds into the HTH TFE/IIEalpha-type domain; sequence AHEALAEIAG…YWRITDEPIQ (84 aa).

Belongs to the TFE family. As to quaternary structure, monomer. Interaction with RNA polymerase subunits RpoF and RpoE is necessary for Tfe stimulatory transcription activity. Able to interact with Tbp and RNA polymerase in the absence of DNA promoter. Interacts both with the preinitiation and elongation complexes.

Its function is as follows. Transcription factor that plays a role in the activation of archaeal genes transcribed by RNA polymerase. Facilitates transcription initiation by enhancing TATA-box recognition by TATA-box-binding protein (Tbp), and transcription factor B (Tfb) and RNA polymerase recruitment. Not absolutely required for transcription in vitro, but particularly important in cases where Tbp or Tfb function is not optimal. It dynamically alters the nucleic acid-binding properties of RNA polymerases by stabilizing the initiation complex and destabilizing elongation complexes. Seems to translocate with the RNA polymerase following initiation and acts by binding to the non template strand of the transcription bubble in elongation complexes. The protein is Transcription factor E of Thermofilum pendens (strain DSM 2475 / Hrk 5).